The chain runs to 34 residues: uncharacterized protein (34 aa).

This is an uncharacterized protein from Escherichia coli (Bacteriophage T4).